Consider the following 222-residue polypeptide: 7-cyano-7-deazaguanine synthase (222 aa).

Phe-11–Leu-21 is a binding site for ATP. Zn(2+) contacts are provided by Cys-187, Cys-195, Cys-198, and Cys-201.

Belongs to the QueC family. It depends on Zn(2+) as a cofactor.

It catalyses the reaction 7-carboxy-7-deazaguanine + NH4(+) + ATP = 7-cyano-7-deazaguanine + ADP + phosphate + H2O + H(+). The protein operates within purine metabolism; 7-cyano-7-deazaguanine biosynthesis. Its function is as follows. Catalyzes the ATP-dependent conversion of 7-carboxy-7-deazaguanine (CDG) to 7-cyano-7-deazaguanine (preQ(0)). This is 7-cyano-7-deazaguanine synthase from Actinobacillus pleuropneumoniae serotype 5b (strain L20).